Reading from the N-terminus, the 102-residue chain is uncharacterized protein (102 aa).

A helical transmembrane segment spans residues 36–55; sequence IISLLAIFIKMCLWLWKQFL.

The protein resides in the membrane. This is an uncharacterized protein from Homo sapiens (Human).